The chain runs to 54 residues: Photoreceptor disk component PRCD (54 aa).

C2 is lipidated: S-palmitoyl cysteine. The segment at 24–54 (QPEPSGADGAVVGSRSERDLQSSGRKEEPLK) is disordered. The segment covering 38 to 54 (RSERDLQSSGRKEEPLK) has biased composition (basic and acidic residues).

The protein belongs to the PRCD family. As to quaternary structure, interacts with RHO/rhodopsin; the interaction promotes PRCD stability. In terms of processing, palmitoylated at Cys-2. Palmitoylation is essential for protein stability and trafficking to the photoreceptor outer segment, but does not appear to be essential for membrane localization. Probably palmitoylated by ZDHHC3. Post-translationally, phosphorylated. Expressed in retina.

The protein resides in the cell projection. Its subcellular location is the cilium. The protein localises to the photoreceptor outer segment. It is found in the membrane. It localises to the endoplasmic reticulum. The protein resides in the golgi apparatus. Functionally, involved in vision. This is Photoreceptor disk component PRCD from Canis lupus familiaris (Dog).